We begin with the raw amino-acid sequence, 359 residues long: Cysteine/Cysteine sulfinic acid decarboxylase (359 aa).

The protein in the N-terminal section; belongs to the HFCD (homo-oligomeric flavin containing Cys decarboxylase) superfamily. It in the C-terminal section; belongs to the PPC synthetase family.

The enzyme catalyses L-cysteine + H(+) = cysteamine + CO2. It carries out the reaction 3-sulfino-L-alanine + H(+) = hypotaurine + CO2. Its activity is regulated as follows. Slightly stimulated in the presence of 1 mM Mg(2+). Catalyzes the decarboxylation of L-cysteine to cysteamine and of 3-sulfino-L-alanine (cysteine sulfinic acid) to hypotaurine. Also catalyzes the decarboxylation of various amino acids such as L-lysine, L-glutamate, L-asparaginate and L-proline. In vitro, shows highest activity with L-cysteine as substrate. This is Cysteine/Cysteine sulfinic acid decarboxylase from Unknown prokaryotic organism.